Here is a 314-residue protein sequence, read N- to C-terminus: Glycerol-3-phosphate dehydrogenase [NAD(P)+] (314 aa).

4 residues coordinate NADPH: Ser-14, Phe-15, Arg-35, and Lys-108. Sn-glycerol 3-phosphate is bound by residues Lys-108 and Gly-136. Ala-140 contacts NADPH. Lys-191, Asp-247, Ser-257, Arg-258, and Asn-259 together coordinate sn-glycerol 3-phosphate. The active-site Proton acceptor is the Lys-191. Arg-258 contacts NADPH. Residues Leu-282 and Glu-284 each contribute to the NADPH site.

Belongs to the NAD-dependent glycerol-3-phosphate dehydrogenase family.

The protein resides in the cytoplasm. The enzyme catalyses sn-glycerol 3-phosphate + NAD(+) = dihydroxyacetone phosphate + NADH + H(+). The catalysed reaction is sn-glycerol 3-phosphate + NADP(+) = dihydroxyacetone phosphate + NADPH + H(+). Its pathway is membrane lipid metabolism; glycerophospholipid metabolism. Catalyzes the reduction of the glycolytic intermediate dihydroxyacetone phosphate (DHAP) to sn-glycerol 3-phosphate (G3P), the key precursor for phospholipid synthesis. The chain is Glycerol-3-phosphate dehydrogenase [NAD(P)+] from Rickettsia bellii (strain OSU 85-389).